A 207-amino-acid chain; its full sequence is uncharacterized protein (207 aa).

This sequence belongs to the methyltransferase superfamily.

This is an uncharacterized protein from Escherichia coli (strain K12).